The following is a 265-amino-acid chain: 4-hydroxy-tetrahydrodipicolinate reductase (265 aa).

NAD(+)-binding positions include 7–12 (GASGRM) and Asp-33. Arg-34 is a binding site for NADP(+). NAD(+) is bound by residues 96-98 (GTT) and 120-123 (AANM). Residue His-153 is the Proton donor/acceptor of the active site. Residue His-154 coordinates (S)-2,3,4,5-tetrahydrodipicolinate. Lys-157 (proton donor) is an active-site residue. 163–164 (GT) contacts (S)-2,3,4,5-tetrahydrodipicolinate.

The protein belongs to the DapB family.

The protein localises to the cytoplasm. It carries out the reaction (S)-2,3,4,5-tetrahydrodipicolinate + NAD(+) + H2O = (2S,4S)-4-hydroxy-2,3,4,5-tetrahydrodipicolinate + NADH + H(+). The catalysed reaction is (S)-2,3,4,5-tetrahydrodipicolinate + NADP(+) + H2O = (2S,4S)-4-hydroxy-2,3,4,5-tetrahydrodipicolinate + NADPH + H(+). The protein operates within amino-acid biosynthesis; L-lysine biosynthesis via DAP pathway; (S)-tetrahydrodipicolinate from L-aspartate: step 4/4. Its function is as follows. Catalyzes the conversion of 4-hydroxy-tetrahydrodipicolinate (HTPA) to tetrahydrodipicolinate. The chain is 4-hydroxy-tetrahydrodipicolinate reductase from Burkholderia vietnamiensis (strain G4 / LMG 22486) (Burkholderia cepacia (strain R1808)).